The following is a 395-amino-acid chain: S-adenosylmethionine synthase (395 aa).

Histidine 16 contributes to the ATP binding site. A Mg(2+)-binding site is contributed by aspartate 18. Glutamate 44 lines the K(+) pocket. The L-methionine site is built by glutamate 57 and glutamine 100. Residues glutamine 100–arginine 110 form a flexible loop region. ATP is bound by residues aspartate 167–lysine 169, arginine 233–phenylalanine 234, aspartate 242, arginine 248–lysine 249, alanine 265, and lysine 269. Aspartate 242 contributes to the L-methionine binding site. Lysine 273 contributes to the L-methionine binding site.

This sequence belongs to the AdoMet synthase family. Homotetramer; dimer of dimers. It depends on Mg(2+) as a cofactor. The cofactor is K(+).

Its subcellular location is the cytoplasm. It catalyses the reaction L-methionine + ATP + H2O = S-adenosyl-L-methionine + phosphate + diphosphate. Its pathway is amino-acid biosynthesis; S-adenosyl-L-methionine biosynthesis; S-adenosyl-L-methionine from L-methionine: step 1/1. Functionally, catalyzes the formation of S-adenosylmethionine (AdoMet) from methionine and ATP. The overall synthetic reaction is composed of two sequential steps, AdoMet formation and the subsequent tripolyphosphate hydrolysis which occurs prior to release of AdoMet from the enzyme. This Burkholderia lata (strain ATCC 17760 / DSM 23089 / LMG 22485 / NCIMB 9086 / R18194 / 383) protein is S-adenosylmethionine synthase.